Reading from the N-terminus, the 279-residue chain is Alcohol dehydrogenase-related 31 kDa protein (279 aa).

Residue 11–34 participates in NAD(+) binding; it reads YVADCGGIALETSKVLMTKNIAKL. Residue S139 participates in substrate binding. Catalysis depends on Y152, which acts as the Proton acceptor.

The protein belongs to the short-chain dehydrogenases/reductases (SDR) family.

In Drosophila guanche (Fruit fly), this protein is Alcohol dehydrogenase-related 31 kDa protein (Adhr).